Consider the following 199-residue polypeptide: Chaperone protein TorD (199 aa).

Belongs to the TorD/DmsD family. TorD subfamily.

Its subcellular location is the cytoplasm. Involved in the biogenesis of TorA. Acts on TorA before the insertion of the molybdenum cofactor and, as a result, probably favors a conformation of the apoenzyme that is competent for acquiring the cofactor. The chain is Chaperone protein TorD from Shigella boydii serotype 18 (strain CDC 3083-94 / BS512).